A 206-amino-acid polypeptide reads, in one-letter code: Large ribosomal subunit protein uL22m (206 aa).

The transit peptide at 1-40 (MAAAVLGQLGALWIHNLRSRGRLAWGVLPQSYVHTSASLD) directs the protein to the mitochondrion.

The protein belongs to the universal ribosomal protein uL22 family. As to quaternary structure, component of the mitochondrial ribosome large subunit (39S) which comprises a 16S rRNA and about 50 distinct proteins.

Its subcellular location is the mitochondrion. This is Large ribosomal subunit protein uL22m (MRPL22) from Pongo abelii (Sumatran orangutan).